The primary structure comprises 288 residues: Prohibitin-1, mitochondrial (288 aa).

The Mitochondrial matrix portion of the chain corresponds to 1–10 (MNNVKVPKIP). A helical; Signal-anchor for type II membrane protein transmembrane segment spans residues 11–30 (GGGAISTLLKVGIIGGLGLY). The Mitochondrial intermembrane segment spans residues 31 to 288 (GATHSLYNVE…GMNLDVDAKN (258 aa)). The stretch at 186–219 (KEFTAAIEAKQVAAQEAERAKFIVEKAEQDKRSA) forms a coiled coil.

The protein belongs to the prohibitin family. In terms of assembly, component of a prohibitin multimeric complex in mitochondrial membranes. Mostly expressed in proliferative tissues, including vasculature, shoot and root apical tissues.

Its subcellular location is the mitochondrion inner membrane. In terms of biological role, prohibitin probably acts as a holdase/unfoldase for the stabilization of newly synthesized mitochondrial proteins. This Arabidopsis thaliana (Mouse-ear cress) protein is Prohibitin-1, mitochondrial (PHB1).